Reading from the N-terminus, the 1048-residue chain is Probable inactive receptor kinase At5g10020 (1048 aa).

The first 21 residues, 1-21, serve as a signal peptide directing secretion; that stretch reads MSHFLTFCFLSLLLLLHGANA. LRR repeat units lie at residues 100-120, 124-146, 148-169, 172-194, 196-217, 224-246, 250-272, 273-294, 298-319, 320-342, 365-387, 389-411, 412-433, 436-457, 469-491, 493-516, 517-539, and 540-560; these read RLRNLSLSGNSFSGRVVPSLG, SLQHLDLSDNGFYGPIPGRISEL, SLNHLNLSSNKFEGGFPSGFRN, QLRSLDLHKNEIWGDVGEIFTEL, NVEFVDLSCNRFNGGLSLPMEN, TLRHLNLSHNALNGKFFSEESIG, NLEIVDLENNQINGELPHFGSQP, SLRILKLARNELFGLVPQELLQ, PLLELDLSRNGFTGSISEINSS, TLTMLNLSSNGLSGDLPSSFKSC, TPDVLDLSSNNLSGSLPNFTSAF, RLSVLSIRNNSVSGSLPSLWGDS, QFSVIDLSSNKFSGFIPVSFFT, SLRSLNLSRNNLEGPIPFRGSR, QMELLDLSTNSLTGMLPGDIGTM, KIKVLNLANNKLSGELPSDLNKLS, GLLFLDLSNNTFKGQIPNKLPSQ, and MVGFNVSYNDLSGIIPEDLRS. The chain crosses the membrane as a helical span at residues 602 to 622; it reads IAIIVASVGAAIMILFVLFAY. Positions 696–733 are disordered; sequence EQGAPATSAPTNLLDDYPAASGRKSSSGGSPLSSSPRF. Residues 716–733 are compositionally biased toward low complexity; it reads SGRKSSSGGSPLSSSPRF. Position 744 is a phosphoserine (S744). A Protein kinase domain is found at 768–1045; the sequence is RAPAEVLGRS…IRQVLDHLTS (278 aa). ATP contacts are provided by residues 774-782 and K796; that span reads LGRSSHGTL.

The protein belongs to the protein kinase superfamily.

It is found in the membrane. In Arabidopsis thaliana (Mouse-ear cress), this protein is Probable inactive receptor kinase At5g10020.